Reading from the N-terminus, the 507-residue chain is Histidine--tRNA ligase (507 aa).

It belongs to the class-II aminoacyl-tRNA synthetase family. In terms of assembly, homodimer.

The protein resides in the cytoplasm. It catalyses the reaction tRNA(His) + L-histidine + ATP = L-histidyl-tRNA(His) + AMP + diphosphate + H(+). This Rhizobium leguminosarum bv. trifolii (strain WSM2304) protein is Histidine--tRNA ligase.